A 331-amino-acid polypeptide reads, in one-letter code: Retinol dehydrogenase 13 (331 aa).

Ser2 carries the N-acetylserine modification. 45–51 (GANTGIG) is a binding site for NADP(+). Ser174 contacts substrate. The Proton acceptor role is filled by Tyr200. The residue at position 323 (Ser323) is a Phosphoserine.

It belongs to the short-chain dehydrogenases/reductases (SDR) family. As to expression, widely expressed. In the retina, detected in the inner segment of the photoreceptor cells. Weak signals are observed in a small population of inner nuclear neurons and the inner plexiform layer.

Its subcellular location is the mitochondrion inner membrane. It carries out the reaction all-trans-retinol + NADP(+) = all-trans-retinal + NADPH + H(+). It functions in the pathway cofactor metabolism; retinol metabolism. In terms of biological role, retinol dehydrogenase with a clear preference for NADP. Oxidizes all-trans-retinol, but seems to reduce all-trans-retinal with much higher efficiency. Has no activity toward steroids. In Homo sapiens (Human), this protein is Retinol dehydrogenase 13 (RDH13).